Consider the following 382-residue polypeptide: MTEHAIKYRLIKKEKHTGARLGEIITPHGTFPTPMFMPVGTQATVKTMSPEELKTLGSGIILSNTYHLWLRPGDELVAEAGGLHKFMNWDQPILTDSGGFQVYSLVQNKKNITEEGVKFKSHLDGRELFLNPEKAISIQNNLGSDIMMSFDECPPFYQPYDYVKASVERTSRWAERGLNAHRRPNDQGLFGIVQGAGFEDLRRQSASDLTSMDFAGYSIGGLAVGESHKEMNAVLDFTTPMLPEDKPRYLMGVGAPDSLIDGVIRGVDMFDCVLPTRIARNGTLMTHFGRVNIRNAKYEYDFTPLDPMCDCYTCTNYTRAYLRHLIKADETFGLRLCSYHNLHFLVNLMKDVRQAIMDDNLLEFREDFCERYGYNQPNAKDF.

Residue D96 is the Proton acceptor of the active site. Residues D96 to F100, D151, Q194, and G221 each bind substrate. Residues G252–S258 are RNA binding. The active-site Nucleophile is D271. The segment at T276 to R280 is RNA binding; important for wobble base 34 recognition. Zn(2+) is bound by residues C309, C311, C314, and H340.

The protein belongs to the queuine tRNA-ribosyltransferase family. Homodimer. Within each dimer, one monomer is responsible for RNA recognition and catalysis, while the other monomer binds to the replacement base PreQ1. Zn(2+) serves as cofactor.

It carries out the reaction 7-aminomethyl-7-carbaguanine + guanosine(34) in tRNA = 7-aminomethyl-7-carbaguanosine(34) in tRNA + guanine. It participates in tRNA modification; tRNA-queuosine biosynthesis. Catalyzes the base-exchange of a guanine (G) residue with the queuine precursor 7-aminomethyl-7-deazaguanine (PreQ1) at position 34 (anticodon wobble position) in tRNAs with GU(N) anticodons (tRNA-Asp, -Asn, -His and -Tyr). Catalysis occurs through a double-displacement mechanism. The nucleophile active site attacks the C1' of nucleotide 34 to detach the guanine base from the RNA, forming a covalent enzyme-RNA intermediate. The proton acceptor active site deprotonates the incoming PreQ1, allowing a nucleophilic attack on the C1' of the ribose to form the product. After dissociation, two additional enzymatic reactions on the tRNA convert PreQ1 to queuine (Q), resulting in the hypermodified nucleoside queuosine (7-(((4,5-cis-dihydroxy-2-cyclopenten-1-yl)amino)methyl)-7-deazaguanosine). The polypeptide is Queuine tRNA-ribosyltransferase (Lactococcus lactis subsp. cremoris (strain MG1363)).